The following is a 2339-amino-acid chain: Voltage-dependent N-type calcium channel subunit alpha-1B (2339 aa).

Positions 1–37 (MVRFGDELGGRYGGPGGGERARGGGAGGAGGPGPGGL) are disordered. The Cytoplasmic portion of the chain corresponds to 1 to 90 (MVRFGDELGG…DNVVRKYAKR (90 aa)). The segment covering 10 to 37 (GRYGGPGGGERARGGGAGGAGGPGPGGL) has biased composition (gly residues). The residue at position 22 (Arg22) is an Omega-N-methylarginine. The I repeat unit spans residues 82–359 (NVVRKYAKRI…LVLGVLSGEF (278 aa)). Residues 91–114 (ITEWPPFEYMILATIIANCIVLAL) traverse the membrane as a helical segment. Residues 115–131 (EQHLPDGDKTPMSERLD) lie on the Extracellular side of the membrane. A helical transmembrane segment spans residues 132 to 152 (DTEPYFIGIFCFEAGIKIIAL). At 153–163 (GFVFHKGSYLR) the chain is on the cytoplasmic side. Residues 164–182 (NGWNVMDFVVVLTGILATA) form a helical membrane-spanning segment. At 183–187 (GTDFD) the chain is on the extracellular side. A helical membrane pass occupies residues 188 to 211 (LRTLRAVRVLRPLKLVSGIPSLQV). Residues 212–221 (VLKSIMKAMV) lie on the Cytoplasmic side of the membrane. Residues 222-244 (PLLQIGLLLFFAILMFAIIGLEF) traverse the membrane as a helical segment. The Extracellular portion of the chain corresponds to 245–331 (YMGKFHKACF…NTNDAAGNTW (87 aa)). An N-linked (GlcNAc...) asparagine glycan is attached at Asn256. Residues 332 to 356 (NWLYFIPLIIIGSFFMLNLVLGVLS) form a helical membrane-spanning segment. The Cytoplasmic portion of the chain corresponds to 357–482 (GEFAKERERV…FFIRRMVKAQ (126 aa)). A binding to the beta subunit region spans residues 379–396 (QQIERELNGYLEWIFKAE). Position 411 is a phosphoserine (Ser411). ATP is bound at residue 451-458 (ASLKSGKT). The stretch at 468–712 (EKMFRFFIRR…VFLAIAVDNL (245 aa)) is one II repeat. Residues 483–501 (SFYWVVLCVVALNTLCVAM) form a helical membrane-spanning segment. Residues 502–511 (VHYNQPRRLT) are Extracellular-facing. A helical membrane pass occupies residues 512–534 (TTLYFAEFVFLGLFLTEMSLKMY). Topologically, residues 535–544 (GLGPRSYFRS) are cytoplasmic. Residue Ser544 participates in a 1,2-diacyl-sn-glycero-3-phospho-(1D-myo-inositol-4,5-bisphosphate) binding. Residues 545–566 (SFNCFDFGVIVGSVFEVVWAAI) form a helical membrane-spanning segment. Topologically, residues 567–573 (KPGSSFG) are extracellular. The helical transmembrane segment at 574–586 (ISVLRALRLLRIF) threads the bilayer. A 1,2-diacyl-sn-glycero-3-phospho-(1D-myo-inositol-4,5-bisphosphate) contacts are provided by Arg584 and Lys587. The Cytoplasmic segment spans residues 587–604 (KVTKYWSSLRNLVVSLLN). The chain crosses the membrane as a helical span at residues 605–630 (SMKSIISLLFLLFLFIVVFALLGMQL). The Extracellular portion of the chain corresponds to 631–682 (FGGQFNFQDETPTTNFDTFPAAILTVFQILTGEDWNAVMYHGIESQGGVSKG). A helical transmembrane segment spans residues 683–709 (MFSSFYFIVLTLFGNYTLLNVFLAIAV). Topologically, residues 710 to 1151 (DNLANAQELT…FCHYIVTMRY (442 aa)) are cytoplasmic. Ser745, Ser748, and Ser783 each carry phosphoserine. 4 stretches are compositionally biased toward basic and acidic residues: residues 816–826 (PLVVELGRDGA), 857–886 (KDKT…EERP), 922–932 (GSPEEAAEREP), and 965–976 (GPREAESGEEPA). Disordered regions lie at residues 816-1038 (PLVV…VTVG) and 1054-1076 (QPED…DPNT). Residues 977-986 (RRHRARHKAQ) show a composition bias toward basic residues. Over residues 990–1029 (EAVEKETTEKEATEKEAEIVEADKEKELRNHQPREPHCDL) the composition is skewed to basic and acidic residues. Position 1069 is a phosphoserine (Ser1069). Residues 1137–1419 (NLLRRFCHYI…IFVALIIITF (283 aa)) form an III repeat. Residues 1152–1170 (FEVVILVVIALSSIALAAE) traverse the membrane as a helical segment. Residues 1171 to 1178 (DPVRTDSP) lie on the Extracellular side of the membrane. Residues 1179–1203 (RNNALKYLDYIFTGVFTFEMVIKMI) form a helical membrane-spanning segment. Topologically, residues 1204-1217 (DLGLLLHPGAYFRD) are cytoplasmic. A helical transmembrane segment spans residues 1218–1238 (LWNILDFIVVSGALVAFAFSG). Residues 1239–1244 (SKGKDI) are Extracellular-facing. Residues 1245–1265 (NTIKSLRVLRVLRPLKTIKRL) traverse the membrane as a helical segment. The Cytoplasmic portion of the chain corresponds to 1266 to 1283 (PKLKAVFDCVVNSLKNVL). Residues 1284–1303 (NILIVYMLFMFIFAVIAVQL) form a helical membrane-spanning segment. At 1304–1390 (FKGKFFYCTD…EQGPSPGYRM (87 aa)) the chain is on the extracellular side. The chain crosses the membrane as a helical span at residues 1391 to 1416 (ELSIFYVVYFVVFPFFFVNIFVALII). Over 1417 to 1471 (ITFQEQGDKVMSECSLEKNERACIDFAISAKPLTRYMPQNRQSFQYKTWTFVVSP) the chain is Cytoplasmic. The IV repeat unit spans residues 1456–1711 (NRQSFQYKTW…LFVAVIMDNF (256 aa)). The helical transmembrane segment at 1472–1490 (PFEYFIMAMIALNTVVLMM) threads the bilayer. Residues 1491–1498 (KFYDAPYE) lie on the Extracellular side of the membrane. A helical transmembrane segment spans residues 1499-1523 (YELMLKCLNIVFTSMFSMECVLKII). Over 1524-1533 (AFGVLNYFRD) the chain is Cytoplasmic. Residues 1534 to 1555 (AWNVFDFVTVLGSITDILVTEI) form a helical membrane-spanning segment. Topologically, residues 1556-1563 (AETNNFIN) are extracellular. A glycan (N-linked (GlcNAc...) asparagine) is linked at Asn1563. A helical membrane pass occupies residues 1564–1582 (LSFLRLFRAARLIKLLRQG). At 1583 to 1601 (YTIRILLWTFVQSFKALPY) the chain is on the cytoplasmic side. Residues 1602–1621 (VCLLIAMLFFIYAIIGMQVF) form a helical membrane-spanning segment. Over 1622–1683 (GNIALDDDTS…ANATECGSDF (62 aa)) the chain is Extracellular. Asn1675 carries an N-linked (GlcNAc...) asparagine glycan. A helical transmembrane segment spans residues 1684–1707 (AYFYFVSFIFLCSFLMLNLFVAVI). At 1708 to 2339 (MDNFEYLTRD…YHHPDQDHWC (632 aa)) the chain is on the cytoplasmic side. The EF-hand domain occupies 1724–1759 (HHLDEFIRVWAEYDPAACGRISYNDMFEMLKHMSPP). Ca(2+) contacts are provided by Asp1737, Arg1743, and Asp1748. Residues 1916 to 1931 (SSTSLSNGGAIQNQES) are compositionally biased toward polar residues. 2 disordered regions span residues 1916–1968 (SSTS…VGRS) and 1981–2206 (TRRG…YKTA). Basic and acidic residues predominate over residues 1946–1960 (DAPHEARPPLERGHS). A compositionally biased stretch (basic residues) spans 2049–2063 (SHHHHHRCHRRRDRK). Ser2066 carries the post-translational modification Phosphoserine. Over residues 2098-2116 (CRRERERRQERGRSQERRQ) the composition is skewed to basic and acidic residues. Residues 2143-2153 (PSLSSHPTSPT) show a composition bias toward low complexity. Residues 2164 to 2180 (GSGSVNGSPLLSTSGAS) are compositionally biased toward polar residues. A phosphoserine mark is found at Ser2224, Ser2233, and Ser2256.

Belongs to the calcium channel alpha-1 subunit (TC 1.A.1.11) family. CACNA1B subfamily. In terms of assembly, multisubunit complex consisting of alpha-1, alpha-2, beta and delta subunits in a 1:1:1:1 ratio. The channel activity is directed by the pore-forming and voltage-sensitive alpha-1 subunit. In many cases, this subunit is sufficient to generate voltage-sensitive calcium channel activity. The auxiliary subunits beta and alpha-2/delta linked by a disulfide bridge regulate the channel activity. Interacts with RIMS1. Interacts with FMR1 (via C-terminus); this interaction induces a decrease in the number of presynaptic functional CACNA1B channels at the cell surface. In terms of processing, phosphorylated in vitro by CaM-kinase II, PKA, PKC and CGPK. As to expression, isoform Alpha-1b-1 and isoform Alpha-1b-2 are expressed in the central nervous system, but not in skeletal muscle or aorta. Expressed in the cerebral white matter, cortex, hippocampus, basal ganglia, and cerebellum.

It is found in the membrane. The catalysed reaction is Ca(2+)(in) = Ca(2+)(out). Is specifically blocked by omega-conotoxin GVIA. Is specifically blocked by omega-conotoxin MVIIA (ziconotide). Is insensitive to dihydropyridines (DHP). Its activity is regulated as follows. Is specifically blocked by omega-conotoxin MVIIA (ziconotide). Is insensitive to dihydropyridines (DHP). Functionally, voltage-sensitive calcium channels (VSCC) mediate the entry of calcium ions into excitable cells and are also involved in a variety of calcium-dependent processes, including muscle contraction, hormone or neurotransmitter release, gene expression, cell motility, cell division and cell death. This alpha-1B subunit gives rise to N-type calcium currents. N-type calcium channels belong to the 'high-voltage activated' (HVA) group. They are involved in pain signaling. Calcium channels containing alpha-1B subunit may play a role in directed migration of immature neurons. Mediates Ca(2+) release probability at hippocampal neuronal soma and synaptic terminals. Its function is as follows. Voltage-sensitive calcium channels (VSCC) mediate the entry of calcium ions into excitable cells and are also involved in a variety of calcium-dependent processes, including muscle contraction, hormone or neurotransmitter release, gene expression, cell motility, cell division and cell death. This alpha-1B subunit gives rise to N-type calcium currents. This Homo sapiens (Human) protein is Voltage-dependent N-type calcium channel subunit alpha-1B (CACNA1B).